The chain runs to 246 residues: Dihydroorotate dehydrogenase B (NAD(+)), electron transfer subunit (246 aa).

An FAD-binding FR-type domain is found at 3–95 (MEYFKGKVKE…IGPLGNGFDI (93 aa)). Residues 48 to 51 (RPIS) and 70 to 71 (GT) each bind FAD. 4 residues coordinate [2Fe-2S] cluster: cysteine 213, cysteine 218, cysteine 221, and cysteine 233.

Belongs to the PyrK family. As to quaternary structure, heterotetramer of 2 PyrK and 2 PyrD type B subunits. It depends on [2Fe-2S] cluster as a cofactor. FAD serves as cofactor.

It functions in the pathway pyrimidine metabolism; UMP biosynthesis via de novo pathway; orotate from (S)-dihydroorotate (NAD(+) route): step 1/1. In terms of biological role, responsible for channeling the electrons from the oxidation of dihydroorotate from the FMN redox center in the PyrD type B subunit to the ultimate electron acceptor NAD(+). The polypeptide is Dihydroorotate dehydrogenase B (NAD(+)), electron transfer subunit (Clostridium perfringens (strain 13 / Type A)).